The following is a 355-amino-acid chain: Heterogeneous nuclear ribonucleoprotein D0 (355 aa).

The interval 1 to 91 is disordered; the sequence is MSEEQFGGDG…SSPRHTEAAA (91 aa). The residue at position 2 (Ser-2) is an N-acetylserine. Low complexity predominate over residues 11-43; it reads AAAAATAAVGGSAGEQEGAMVAAAAQGPAAAAG. Residues 44 to 58 show a composition bias toward gly residues; sequence SGSGGGGSAAGGTEG. The segment covering 64-73 has biased composition (basic and acidic residues); it reads EGAKIDASKN. Ser-71 bears the Phosphoserine mark. Lys-72 is covalently cross-linked (Glycyl lysine isopeptide (Lys-Gly) (interchain with G-Cter in SUMO2)). Ser-80, Ser-82, and Ser-83 each carry phosphoserine. RRM domains follow at residues 97-179 and 182-261; these read WKMF…KTKE and KKIF…MSKE. The residue at position 119 (Lys-119) is an N6-methyllysine. Thr-127 carries the post-translational modification Phosphothreonine. A Glycyl lysine isopeptide (Lys-Gly) (interchain with G-Cter in SUMO2) cross-link involves residue Lys-129. Lys-165 carries the post-translational modification N6-acetyllysine. Ser-190 bears the Phosphoserine mark. The residue at position 193 (Thr-193) is a Phosphothreonine. A Glycyl lysine isopeptide (Lys-Gly) (interchain with G-Cter in SUMO2) cross-link involves residue Lys-197. N6-acetyllysine is present on residues Lys-243 and Lys-251. Glu-261 and Tyr-263 each carry omega-N-methylarginine. A Phosphoserine modification is found at Ser-271. Arg-272, Arg-278, Arg-280, and Arg-282 each carry omega-N-methylarginine. Arg-345 carries the post-translational modification Asymmetric dimethylarginine; alternate. Arg-345 bears the Dimethylated arginine; alternate mark. Arg-345 is modified (omega-N-methylarginine; alternate).

In terms of assembly, identified in a IGF2BP1-dependent mRNP granule complex containing untranslated mRNAs. Part of a complex associated with the FOS mCRD domain and consisting of PABPC1, PAIP1, CSDE1/UNR and SYNCRIP. Interacts with IGF2BP2. Interacts with GTPBP1. Interacts with EIF4G1; the interaction requires RNA. Interacts with EIF3B and RPS3. In terms of processing, methylated by PRMT1, in an insulin-dependent manner. The PRMT1-mediated methylation regulates its phosphorylation. Post-translationally, arg-345 is dimethylated, probably to asymmetric dimethylarginine.

It is found in the nucleus. It localises to the cytoplasm. Functionally, binds with high affinity to RNA molecules that contain AU-rich elements (AREs) found within the 3'-UTR of many proto-oncogenes and cytokine mRNAs. Also binds to double- and single-stranded DNA sequences in a specific manner and functions a transcription factor. Each of the RNA-binding domains specifically can bind solely to a single-stranded non-monotonous 5'-UUAG-3' sequence and also weaker to the single-stranded 5'-TTAGGG-3' telomeric DNA repeat. Binds RNA oligonucleotides with 5'-UUAGGG-3' repeats more tightly than the telomeric single-stranded DNA 5'-TTAGGG-3' repeats. Binding of RRM1 to DNA inhibits the formation of DNA quadruplex structure which may play a role in telomere elongation. May be involved in translationally coupled mRNA turnover. Implicated with other RNA-binding proteins in the cytoplasmic deadenylation/translational and decay interplay of the FOS mRNA mediated by the major coding-region determinant of instability (mCRD) domain. May play a role in the regulation of the rhythmic expression of circadian clock core genes. Directly binds to the 3'UTR of CRY1 mRNA and induces CRY1 rhythmic translation. May also be involved in the regulation of PER2 translation. This Mus musculus (Mouse) protein is Heterogeneous nuclear ribonucleoprotein D0 (Hnrnpd).